We begin with the raw amino-acid sequence, 604 residues long: FAD-linked oxidoreductase easE (604 aa).

The signal sequence occupies residues 1–25 (MQFLLWSTGLVALLSWLIYTQETQS). N-linked (GlcNAc...) asparagine glycosylation is found at Asn-47, Asn-70, Asn-106, and Asn-196. The FAD-binding PCMH-type domain maps to 125–308 (QGRIPLFTVG…TRATMRVFPD (184 aa)).

Belongs to the oxygen-dependent FAD-linked oxidoreductase family. The cofactor is FAD.

It functions in the pathway alkaloid biosynthesis; ergot alkaloid biosynthesis. In terms of biological role, FAD-linked oxidoreductase; part of the gene cluster that mediates the biosynthesis of fungal ergot alkaloid. DmaW catalyzes the first step of ergot alkaloid biosynthesis by condensing dimethylallyl diphosphate (DMAP) and tryptophan to form 4-dimethylallyl-L-tryptophan. The second step is catalyzed by the methyltransferase easF that methylates 4-dimethylallyl-L-tryptophan in the presence of S-adenosyl-L-methionine, resulting in the formation of 4-dimethylallyl-L-abrine. The catalase easC and the FAD-dependent oxidoreductase easE then transform 4-dimethylallyl-L-abrine to chanoclavine-I which is further oxidized by easD in the presence of NAD(+), resulting in the formation of chanoclavine-I aldehyde. Chanoclavine-I aldehyde is the precursor of ergoamides and ergopeptines in Clavicipitaceae, and clavine-type alcaloids such as fumiclavine in Trichocomaceae. However, the metabolites downstream of chanoclavine-I aldehyde in Arthrodermataceae have not been identified yet. This chain is FAD-linked oxidoreductase easE, found in Trichophyton verrucosum (strain HKI 0517).